The following is a 434-amino-acid chain: Methylenetetrahydrofolate--tRNA-(uracil-5-)-methyltransferase TrmFO (434 aa).

FAD is bound at residue 9 to 14 (GAGLAG).

The protein belongs to the MnmG family. TrmFO subfamily. Requires FAD as cofactor.

The protein localises to the cytoplasm. The enzyme catalyses uridine(54) in tRNA + (6R)-5,10-methylene-5,6,7,8-tetrahydrofolate + NADH + H(+) = 5-methyluridine(54) in tRNA + (6S)-5,6,7,8-tetrahydrofolate + NAD(+). The catalysed reaction is uridine(54) in tRNA + (6R)-5,10-methylene-5,6,7,8-tetrahydrofolate + NADPH + H(+) = 5-methyluridine(54) in tRNA + (6S)-5,6,7,8-tetrahydrofolate + NADP(+). In terms of biological role, catalyzes the folate-dependent formation of 5-methyl-uridine at position 54 (M-5-U54) in all tRNAs. In Listeria monocytogenes serotype 4b (strain F2365), this protein is Methylenetetrahydrofolate--tRNA-(uracil-5-)-methyltransferase TrmFO.